The primary structure comprises 173 residues: Ribosome maturation factor RimM (173 aa).

The PRC barrel domain maps to 78 to 157; sequence EEEFYLADLI…VLVVPPEEVE (80 aa). Residues 152–173 form a disordered region; it reads PPEEVEAQEPPEKDAGGDEPSP.

Belongs to the RimM family. As to quaternary structure, binds ribosomal protein uS19.

It localises to the cytoplasm. In terms of biological role, an accessory protein needed during the final step in the assembly of 30S ribosomal subunit, possibly for assembly of the head region. Essential for efficient processing of 16S rRNA. May be needed both before and after RbfA during the maturation of 16S rRNA. It has affinity for free ribosomal 30S subunits but not for 70S ribosomes. This chain is Ribosome maturation factor RimM, found in Beijerinckia indica subsp. indica (strain ATCC 9039 / DSM 1715 / NCIMB 8712).